Here is a 360-residue protein sequence, read N- to C-terminus: Photosystem II protein D1 2 (360 aa).

Topologically, residues 1 to 31 (MTTTLQQRESASLWEQFCQWVTSTNNRIYVG) are cytoplasmic. Residues 32-53 (WFGTLMIPTLLTATTCFIIAFI) traverse the membrane as a helical segment. The Lumenal, thylakoid segment spans residues 54 to 110 (AAPPVDIDGIREPVAGSLLYGNNIISGAVVPSSNAIGLHFYPIWEAASLDEWLYNGG). The helical transmembrane segment at 111 to 134 (PYQLVVFHFLIGIFCYMGRQWELS) threads the bilayer. His-118 serves as a coordination point for chlorophyll a. Tyr-126 contacts pheophytin a. Topologically, residues 135–142 (YRLGMRPW) are cytoplasmic. The helical transmembrane segment at 143–161 (ICVAYSAPVSAATAVFLIY) threads the bilayer. Tyr-147 contacts pheophytin a. Topologically, residues 162–191 (PIGQGSFSDGMPLGISGTFNFMIVFQAEHN) are lumenal, thylakoid. The [CaMn4O5] cluster site is built by Asp-170 and Glu-189. A helical membrane pass occupies residues 192-218 (ILMHPFHMLGVAGVFGGSLFSAMHGSL). Residue His-198 coordinates chlorophyll a. A quinone is bound by residues His-215, Ser-264, and Phe-265. A Fe cation-binding site is contributed by His-215. The Cytoplasmic portion of the chain corresponds to 219–270 (VTSSLVRETTEVESQNYGYKFGQEEETYNIVAAHGYFGRLIFQYASFNNSRS). A helical membrane pass occupies residues 271–295 (LHFFLGAWPVIGIWFTAMGVSTMAF). A Fe cation-binding site is contributed by His-272. Residues 296–360 (NLNGFNFNQS…VALTAPAVNG (65 aa)) are Lumenal, thylakoid-facing. Positions 332, 333, 337, 342, and 344 each coordinate [CaMn4O5] cluster. The propeptide occupies 345-360 (SGEQAPVALTAPAVNG).

The protein belongs to the reaction center PufL/M/PsbA/D family. In terms of assembly, PSII is composed of 1 copy each of membrane proteins PsbA, PsbB, PsbC, PsbD, PsbE, PsbF, PsbH, PsbI, PsbJ, PsbK, PsbL, PsbM, PsbT, PsbX, PsbY, PsbZ, Psb30/Ycf12, peripheral proteins PsbO, CyanoQ (PsbQ), PsbU, PsbV and a large number of cofactors. It forms dimeric complexes. The cofactor is The D1/D2 heterodimer binds P680, chlorophylls that are the primary electron donor of PSII, and subsequent electron acceptors. It shares a non-heme iron and each subunit binds pheophytin, quinone, additional chlorophylls, carotenoids and lipids. D1 provides most of the ligands for the Mn4-Ca-O5 cluster of the oxygen-evolving complex (OEC). There is also a Cl(-1) ion associated with D1 and D2, which is required for oxygen evolution. The PSII complex binds additional chlorophylls, carotenoids and specific lipids.. C-terminally processed by CtpA; processing is essential to allow assembly of the oxygen-evolving complex and photosynthetic growth. In terms of processing, tyr-161 forms a radical intermediate that is referred to as redox-active TyrZ, YZ or Y-Z.

The protein resides in the cellular thylakoid membrane. It carries out the reaction 2 a plastoquinone + 4 hnu + 2 H2O = 2 a plastoquinol + O2. Photosystem II (PSII) is a light-driven water:plastoquinone oxidoreductase that uses light energy to abstract electrons from H(2)O, generating O(2) and a proton gradient subsequently used for ATP formation. It consists of a core antenna complex that captures photons, and an electron transfer chain that converts photonic excitation into a charge separation. The D1/D2 (PsbA/PsbD) reaction center heterodimer binds P680, the primary electron donor of PSII as well as several subsequent electron acceptors. This is Photosystem II protein D1 2 from Synechocystis sp. (strain ATCC 27184 / PCC 6803 / Kazusa).